A 315-amino-acid polypeptide reads, in one-letter code: Thioredoxin reductase (315 aa).

34 to 41 contacts FAD; it reads EGQKVGGQ. Cysteines 134 and 137 form a disulfide. 282-291 serves as a coordination point for FAD; the sequence is DIRVKSLRQV.

Belongs to the class-II pyridine nucleotide-disulfide oxidoreductase family. As to quaternary structure, homodimer. FAD serves as cofactor.

The protein resides in the cytoplasm. The catalysed reaction is [thioredoxin]-dithiol + NADP(+) = [thioredoxin]-disulfide + NADPH + H(+). In Peptoclostridium acidaminophilum (Eubacterium acidaminophilum), this protein is Thioredoxin reductase (trxB).